Consider the following 308-residue polypeptide: Cell division protein FtsQ (308 aa).

The interval M1–A28 is disordered. Over M1–R46 the chain is Cytoplasmic. Positions P18–A28 are enriched in basic and acidic residues. The chain crosses the membrane as a helical span at residues T47 to A67. Topologically, residues S68–L308 are periplasmic. In terms of domain architecture, POTRA spans F92–R160.

The protein belongs to the FtsQ/DivIB family. FtsQ subfamily.

The protein localises to the cell inner membrane. Essential cell division protein. The chain is Cell division protein FtsQ from Cereibacter sphaeroides (strain ATCC 17023 / DSM 158 / JCM 6121 / CCUG 31486 / LMG 2827 / NBRC 12203 / NCIMB 8253 / ATH 2.4.1.) (Rhodobacter sphaeroides).